The sequence spans 470 residues: ATP synthase subunit beta (470 aa).

Residue 156-163 (GGAGVGKT) participates in ATP binding.

This sequence belongs to the ATPase alpha/beta chains family. As to quaternary structure, F-type ATPases have 2 components, CF(1) - the catalytic core - and CF(0) - the membrane proton channel. CF(1) has five subunits: alpha(3), beta(3), gamma(1), delta(1), epsilon(1). CF(0) has three main subunits: a(1), b(2) and c(9-12). The alpha and beta chains form an alternating ring which encloses part of the gamma chain. CF(1) is attached to CF(0) by a central stalk formed by the gamma and epsilon chains, while a peripheral stalk is formed by the delta and b chains.

It localises to the cell inner membrane. It catalyses the reaction ATP + H2O + 4 H(+)(in) = ADP + phosphate + 5 H(+)(out). In terms of biological role, produces ATP from ADP in the presence of a proton gradient across the membrane. The catalytic sites are hosted primarily by the beta subunits. The protein is ATP synthase subunit beta of Nitratidesulfovibrio vulgaris (strain ATCC 29579 / DSM 644 / CCUG 34227 / NCIMB 8303 / VKM B-1760 / Hildenborough) (Desulfovibrio vulgaris).